Reading from the N-terminus, the 132-residue chain is Large ribosomal subunit protein bL12 (132 aa).

The protein belongs to the bacterial ribosomal protein bL12 family. Homodimer. Part of the ribosomal stalk of the 50S ribosomal subunit. Forms a multimeric L10(L12)X complex, where L10 forms an elongated spine to which 2 to 4 L12 dimers bind in a sequential fashion. Binds GTP-bound translation factors.

Its function is as follows. Forms part of the ribosomal stalk which helps the ribosome interact with GTP-bound translation factors. Is thus essential for accurate translation. In Chloroflexus aurantiacus (strain ATCC 29366 / DSM 635 / J-10-fl), this protein is Large ribosomal subunit protein bL12.